A 67-amino-acid polypeptide reads, in one-letter code: MPQLDTSTWFTTVLASSITLFILMQLKISFHDLHKKPSNKYLKLFKPTNPWEQKWTKIYSPLSLPQP.

The helical transmembrane segment at 8–24 threads the bilayer; the sequence is TWFTTVLASSITLFILM. An N6-acetyllysine; alternate modification is found at Lys54. Lys54 bears the N6-succinyllysine; alternate mark. Residue Lys57 is modified to N6-acetyllysine.

This sequence belongs to the ATPase protein 8 family. As to quaternary structure, component of the ATP synthase complex composed at least of ATP5F1A/subunit alpha, ATP5F1B/subunit beta, ATP5MC1/subunit c (homooctomer), MT-ATP6/subunit a, MT-ATP8/subunit 8, ATP5ME/subunit e, ATP5MF/subunit f, ATP5MG/subunit g, ATP5MK/subunit k, ATP5MJ/subunit j, ATP5F1C/subunit gamma, ATP5F1D/subunit delta, ATP5F1E/subunit epsilon, ATP5PF/subunit F6, ATP5PB/subunit b, ATP5PD/subunit d, ATP5PO/subunit OSCP. ATP synthase complex consists of a soluble F(1) head domain (subunits alpha(3) and beta(3)) - the catalytic core - and a membrane F(0) domain - the membrane proton channel (subunits c, a, 8, e, f, g, k and j). These two domains are linked by a central stalk (subunits gamma, delta, and epsilon) rotating inside the F1 region and a stationary peripheral stalk (subunits F6, b, d, and OSCP). Interacts with PRICKLE3.

Its subcellular location is the mitochondrion membrane. Its function is as follows. Subunit 8, of the mitochondrial membrane ATP synthase complex (F(1)F(0) ATP synthase or Complex V) that produces ATP from ADP in the presence of a proton gradient across the membrane which is generated by electron transport complexes of the respiratory chain. ATP synthase complex consist of a soluble F(1) head domain - the catalytic core - and a membrane F(1) domain - the membrane proton channel. These two domains are linked by a central stalk rotating inside the F(1) region and a stationary peripheral stalk. During catalysis, ATP synthesis in the catalytic domain of F(1) is coupled via a rotary mechanism of the central stalk subunits to proton translocation. In vivo, can only synthesize ATP although its ATP hydrolase activity can be activated artificially in vitro. Part of the complex F(0) domain. This Cricetulus griseus (Chinese hamster) protein is ATP synthase F(0) complex subunit 8.